A 187-amino-acid polypeptide reads, in one-letter code: Elongation factor P (187 aa).

Belongs to the elongation factor P family.

The protein localises to the cytoplasm. Its pathway is protein biosynthesis; polypeptide chain elongation. Functionally, involved in peptide bond synthesis. Stimulates efficient translation and peptide-bond synthesis on native or reconstituted 70S ribosomes in vitro. Probably functions indirectly by altering the affinity of the ribosome for aminoacyl-tRNA, thus increasing their reactivity as acceptors for peptidyl transferase. The sequence is that of Elongation factor P from Pseudarthrobacter chlorophenolicus (strain ATCC 700700 / DSM 12829 / CIP 107037 / JCM 12360 / KCTC 9906 / NCIMB 13794 / A6) (Arthrobacter chlorophenolicus).